Here is a 190-residue protein sequence, read N- to C-terminus: Potassium-transporting ATPase KdpC subunit (190 aa).

Residues leucine 10–glycine 30 form a helical membrane-spanning segment.

Belongs to the KdpC family. As to quaternary structure, the system is composed of three essential subunits: KdpA, KdpB and KdpC.

Its subcellular location is the cell inner membrane. In terms of biological role, part of the high-affinity ATP-driven potassium transport (or Kdp) system, which catalyzes the hydrolysis of ATP coupled with the electrogenic transport of potassium into the cytoplasm. This subunit acts as a catalytic chaperone that increases the ATP-binding affinity of the ATP-hydrolyzing subunit KdpB by the formation of a transient KdpB/KdpC/ATP ternary complex. The protein is Potassium-transporting ATPase KdpC subunit of Cronobacter sakazakii (strain ATCC BAA-894) (Enterobacter sakazakii).